Reading from the N-terminus, the 336-residue chain is Anthranilate phosphoribosyltransferase (336 aa).

Residues Gly-82, 85 to 86 (GD), Thr-90, 92 to 95 (NIST), 110 to 118 (KHGNRSVSS), and Ser-122 each bind 5-phospho-alpha-D-ribose 1-diphosphate. Gly-82 contacts anthranilate. Residue Ser-94 coordinates Mg(2+). Residue Asn-113 participates in anthranilate binding. Arg-168 lines the anthranilate pocket. Asp-227 and Glu-228 together coordinate Mg(2+).

The protein belongs to the anthranilate phosphoribosyltransferase family. In terms of assembly, homodimer. The cofactor is Mg(2+).

The catalysed reaction is N-(5-phospho-beta-D-ribosyl)anthranilate + diphosphate = 5-phospho-alpha-D-ribose 1-diphosphate + anthranilate. It functions in the pathway amino-acid biosynthesis; L-tryptophan biosynthesis; L-tryptophan from chorismate: step 2/5. In terms of biological role, catalyzes the transfer of the phosphoribosyl group of 5-phosphorylribose-1-pyrophosphate (PRPP) to anthranilate to yield N-(5'-phosphoribosyl)-anthranilate (PRA). The protein is Anthranilate phosphoribosyltransferase of Leptospira interrogans serogroup Icterohaemorrhagiae serovar Lai (strain 56601).